A 661-amino-acid polypeptide reads, in one-letter code: Kyphoscoliosis peptidase (661 aa).

Residues 28-41 (GTLSDQQANPSSLL) are compositionally biased toward polar residues. 2 disordered regions span residues 28–47 (GTLS…GGGF) and 115–136 (QGDK…HAYP). Catalysis depends on residues C225, H267, and D282.

Belongs to the transglutaminase-like superfamily. In terms of assembly, interacts with IGFN1 and FLNC. As to expression, highly expressed in skeletal muscle.

The protein resides in the cytoplasm. It is found in the cytoskeleton. Its subcellular location is the myofibril. The protein localises to the sarcomere. It localises to the z line. Probable cytoskeleton-associated protease required for normal muscle growth. Involved in function, maturation and stabilization of the neuromuscular junction. May act by cleaving muscle-specific proteins such as FLNC. The chain is Kyphoscoliosis peptidase from Homo sapiens (Human).